Consider the following 529-residue polypeptide: MDSDEGYNYEFDDEEECSEESGADEHEDELELGEVELVEAGLSGSERAGLCGEGGGSALGPGPGGEEDEDYRYEVLTAEQILQHMVECIREVNEVIQNPATITRILLSHFNWDKEKLMERYFDGNLEKLFSECHVINPSKKSRTRQMNTRSSALDMPCQICYLNYPNSYFTGLECGHKFCMQCWGEYLTTKIIEEGMGQTISCPAHGCDILVDDNTVMRLITDSKVKLKYQHLITNSFVECNRLLKWCPAPDCHHVVKVQYPDAKPVHCKCGRQFCFNCGENWHDPVKCKWLRKWIKKCDDDSETSNWIAANTKECPKCHVTIEKDGGCNHMVCRNQNCKAEFCWVCLGPWEPHGSAWYNCNRYNEDDAKAARDAQERSRAALQRYLFYCNRYMNHMQSLRFEHKLYAQVKQKMEEMQQHNMSWIEVQFLKKAVDVLCQCRSTLMYTYVFAFYLKKNNQSIIFENNQADLENATEVLSGYLERDISQDSLQDIKQKVQDKYRYCESRRRVLLLHVHEGYEKDLWEYIED.

2 disordered regions span residues Met1–Glu29 and Glu46–Glu69. The span at Cys51–Gly64 shows a compositional bias: gly residues. Residues Thr77–Asn125 form a UBA-like region. The TRIAD supradomain stretch occupies residues Leu154 to Asn365. Zn(2+)-binding residues include Cys158, Cys161, Cys175, His177, Cys180, Cys183, Cys203, Cys208, Cys248, Cys253, Cys269, Cys271, Cys276, Cys279, His284, Cys289, Cys316, and Cys319. The segment at Cys158–Cys208 adopts an RING-type 1 zinc-finger fold. Residues Leu228–Cys289 form an IBR-type zinc finger. The segment at Cys316–Cys347 adopts an RING-type 2; atypical zinc-finger fold. Cys329 is a catalytic residue. Zn(2+) is bound by residues Cys334, Cys339, Cys344, Cys347, His354, and Cys361. The segment at Arg380 to Asp529 is ariadne domain.

Belongs to the RBR family. Ariadne subfamily. As to quaternary structure, interacts (via the first RING-type zinc finger) with ube2l3. Associates with cullin-RING ubiquitin ligase (CRL) complexes containing neddylated cullin.

Its subcellular location is the cytoplasm. The protein resides in the nucleus. The enzyme catalyses [E2 ubiquitin-conjugating enzyme]-S-ubiquitinyl-L-cysteine + [acceptor protein]-L-lysine = [E2 ubiquitin-conjugating enzyme]-L-cysteine + [acceptor protein]-N(6)-ubiquitinyl-L-lysine.. It participates in protein modification; protein ubiquitination. With respect to regulation, autoinhibited by the ariadne domain, which masks the second RING-type zinc finger that contains the active site and inhibits the E3 activity. Inhibition is relieved upon binding to neddylated cullin-RING ubiquitin ligase complexes, which activate the E3 ligase activity of ARIH1. In terms of biological role, E3 ubiquitin-protein ligase, which catalyzes ubiquitination of target proteins together with ubiquitin-conjugating enzyme E2 ube2l3. Acts as an atypical E3 ubiquitin-protein ligase by working together with cullin-RING ubiquitin ligase (CRL) complexes and initiating ubiquitination of CRL substrates: associates with CRL complexes and specifically mediates addition of the first ubiquitin on CRLs targets. The initial ubiquitin is then elongated. E3 ubiquitin-protein ligase activity is activated upon binding to neddylated cullin-RING ubiquitin ligase complexes. The sequence is that of E3 ubiquitin-protein ligase arih1 (arih1) from Xenopus laevis (African clawed frog).